Reading from the N-terminus, the 454-residue chain is N-myc 2 proto-oncogene protein (454 aa).

Disordered stretches follow at residues 132–166 (SEKM…HSGT), 230–269 (VAAP…DEEE), and 325–374 (PSPY…VRRR). Residues 151 to 161 (PGAGAASPAGR) are compositionally biased toward low complexity. Over residues 256–269 (ALSDEVDEEEDEEE) the composition is skewed to acidic residues. Over residues 363 to 374 (RKSDSEDSVRRR) the composition is skewed to basic and acidic residues. The bHLH domain occupies 371–423 (VRRRNHNILERQRRNDLRSSFTTLRDHVPELVKNEKAAKVVILKKACEYVHYL). Positions 423–444 (LQAKEHQLLMEKEKLQARQQQL) are leucine-zipper.

In terms of assembly, efficient DNA binding requires dimerization with another bHLH protein.

The protein resides in the nucleus. The protein is N-myc 2 proto-oncogene protein (N-MYC2) of Marmota monax (Woodchuck).